We begin with the raw amino-acid sequence, 486 residues long: Serralysin (486 aa).

H187 contacts Zn(2+). Residue E188 is part of the active site. Residues H191 and H197 each coordinate Zn(2+). Ca(2+)-binding residues include R266, D269, D298, G300, G301, D303, T340, and E342. Hemolysin-type calcium-binding repeat units lie at residues 345–362 (IGGS…ANTL) and 363–380 (KGGA…ADNL).

The protein belongs to the peptidase M10B family. The cofactor is Zn(2+). It depends on Ca(2+) as a cofactor.

It localises to the secreted. The catalysed reaction is Preferential cleavage of bonds with hydrophobic residues in P1'.. This chain is Serralysin (prtA1), found in Photorhabdus luminescens (Xenorhabdus luminescens).